We begin with the raw amino-acid sequence, 589 residues long: Proline--tRNA ligase (589 aa).

The protein belongs to the class-II aminoacyl-tRNA synthetase family. ProS type 1 subfamily. Homodimer.

The protein resides in the cytoplasm. It carries out the reaction tRNA(Pro) + L-proline + ATP = L-prolyl-tRNA(Pro) + AMP + diphosphate. In terms of biological role, catalyzes the attachment of proline to tRNA(Pro) in a two-step reaction: proline is first activated by ATP to form Pro-AMP and then transferred to the acceptor end of tRNA(Pro). As ProRS can inadvertently accommodate and process non-cognate amino acids such as alanine and cysteine, to avoid such errors it has two additional distinct editing activities against alanine. One activity is designated as 'pretransfer' editing and involves the tRNA(Pro)-independent hydrolysis of activated Ala-AMP. The other activity is designated 'posttransfer' editing and involves deacylation of mischarged Ala-tRNA(Pro). The misacylated Cys-tRNA(Pro) is not edited by ProRS. This Corynebacterium aurimucosum (strain ATCC 700975 / DSM 44827 / CIP 107346 / CN-1) (Corynebacterium nigricans) protein is Proline--tRNA ligase.